Reading from the N-terminus, the 1035-residue chain is Potassium-transporting ATPase alpha chain 1 (1035 aa).

Residues 1–41 form a disordered region; that stretch reads MGKAENYELYSVELGPGPGGDMAAKMSKKKKAGGGGGKRKE. Topologically, residues 1–98 are cytoplasmic; the sequence is MGKAENYELY…NALRPPRGTP (98 aa). A phosphotyrosine mark is found at Y7 and Y10. Basic residues predominate over residues 26 to 40; sequence MSKKKKAGGGGGKRK. Residue S27 is modified to Phosphoserine. The chain crosses the membrane as a helical span at residues 99 to 119; it reads EYVKFARQLAGGLQCLMWVAA. The Lumenal segment spans residues 120–142; sequence AICLIAFAIQASEGDLTTDDNLY. The chain crosses the membrane as a helical span at residues 143–163; sequence LAIALIAVVVVTGCFGYYQEF. Residues 164-299 lie on the Cytoplasmic side of the membrane; it reads KSTNIIASFK…NEKTPIAIEI (136 aa). A helical membrane pass occupies residues 300–319; that stretch reads EHFVDIIAGLAILFGATFFI. Over 320 to 331 the chain is Lumenal; that stretch reads VAMCIGYTFLRA. A helical membrane pass occupies residues 332–349; it reads MVFFMAIVVAYVPEGLLA. K(+)-binding residues include V340, A341, V343, and E345. The Cytoplasmic segment spans residues 350–783; sequence TVTVCLSLTA…EQGRLIFDNL (434 aa). D387 serves as the catalytic 4-aspartylphosphate intermediate. 2 residues coordinate Mg(2+): D387 and T389. S463 and S601 each carry phosphoserine. Mg(2+) is bound by residues D728 and D732. A helical transmembrane segment spans residues 784–803; it reads KKSIAYTLTKNIPELTPYLI. E797 is a K(+) binding site. Over 804-813 the chain is Lumenal; sequence YITVSVPLPL. The helical transmembrane segment at 814 to 834 threads the bilayer; the sequence is GCITILFIELCTDIFPSVSLA. E822 contacts K(+). The Cytoplasmic portion of the chain corresponds to 835 to 854; that stretch reads YEKAESDIMHLRPRNPKRDR. S840 bears the Phosphoserine mark. Residues 855–877 form a helical membrane-spanning segment; it reads LVNEPLAAYSYFQIGAIQSFAGF. Residues 878 to 929 lie on the Lumenal side of the membrane; the sequence is TDYFTAMAQEGWFPLLCVGLRAQWEDHHLQDLQDSYGQEWTFGQRLYQQYTC. A helical transmembrane segment spans residues 930 to 949; that stretch reads YTVFFISIEVCQIADVLIRK. At 950–963 the chain is on the cytoplasmic side; sequence TRRLSAFQQGFFRN. S954 is subject to Phosphoserine; by PKA. A helical membrane pass occupies residues 964 to 982; the sequence is KILVIAIVFQVCIGCFLCY. Residues 983–997 lie on the Lumenal side of the membrane; that stretch reads CPGMPNIFNFMPIRF. A helical membrane pass occupies residues 998 to 1018; it reads QWWLVPLPYGILIFVYDEIRK. Topologically, residues 1019-1035 are cytoplasmic; it reads LGVRCCPGSWWDQELYY.

Belongs to the cation transport ATPase (P-type) (TC 3.A.3) family. Type IIC subfamily. As to quaternary structure, the gastric H(+)/K(+) ATPase pump is composed of the catalytic alpha subunit ATP4A and the regulatory beta subunit ATP4B. Interacts (via the P-domain) with ATP4B (via N-terminus); this interaction stabilizes the lumenal-open E2 conformation state and prevents the reverse reaction of the transport cycle. In terms of tissue distribution, expressed in gastric parietal cells (at protein level).

It localises to the apical cell membrane. It catalyses the reaction K(+)(out) + ATP + H2O + H(+)(in) = K(+)(in) + ADP + phosphate + 2 H(+)(out). The catalytic subunit of the gastric H(+)/K(+) ATPase pump which transports H(+) ions in exchange for K(+) ions across the apical membrane of parietal cells. Uses ATP as an energy source to pump H(+) ions to the gastric lumen while transporting K(+) ion from the lumen into the cell. Remarkably generates a million-fold proton gradient across the gastric parietal cell membrane, acidifying the gastric juice down to pH 1. Within a transport cycle, the transfer of a H(+) ion across the membrane is coupled to ATP hydrolysis and is associated with a transient phosphorylation that shifts the pump conformation from inward-facing (E1) to outward-facing state (E2). The release of the H(+) ion in the stomach lumen is followed by binding of K(+) ion converting the pump conformation back to the E1 state. This chain is Potassium-transporting ATPase alpha chain 1, found in Homo sapiens (Human).